Reading from the N-terminus, the 26-residue chain is GTP-binding protein Rheb (26 aa).

Residues serine 1, serine 2, valine 13, tyrosine 16, and threonine 19 each coordinate GTP. Serine 1 lines the Mg(2+) pocket. The Effector region motif lies at 16–24; that stretch reads YDPTIENTF. Threonine 19 is a Mg(2+) binding site.

The protein belongs to the small GTPase superfamily. Rheb family.

It carries out the reaction GTP + H2O = GDP + phosphate + H(+). Binds GTP and exhibits intrinsic GTPase activity. This chain is GTP-binding protein Rheb, found in Crocodylus siamensis (Siamese crocodile).